Consider the following 333-residue polypeptide: MHKICVIEGDGIGKEVVPATIQVLEATGLPFEFVYAEAGDEVYKRTGKALPEETIETALDCDAVLFGAAGETAADVIVKLRHILDTYANIRPVKAYKGVKCLRPDIDYVIVRENTEGLYKGIEAEIDEGITIATRVITEKACERIFRFAFNLARERKKMGKEGKVTCAHKANVLKLTDGLFKKIFYKVAEEYDDIKAEDYYIDAMNMYIITKPQVFDVVVTSNLFGDILSDGAAGTVGGLGLAPSANIGDEHGLFEPVHGSAPDIAGKKIANPTATILSAVLMLRYLGEYEAADKVEKALEEVLALGLTTPDLGGNLNTFEMAEEVAKRVREE.

Substrate-binding residues include Arg81, Arg91, Arg112, and Asp203. The Mg(2+) site is built by Asp203, Asp227, and Asp231. 260–272 (GSAPDIAGKKIAN) serves as a coordination point for NAD(+).

This sequence belongs to the isocitrate and isopropylmalate dehydrogenases family. In terms of assembly, homotetramer. Mg(2+) serves as cofactor. Requires Mn(2+) as cofactor.

The protein resides in the cytoplasm. It catalyses the reaction (2R,3S)-3-isopropylmalate + NAD(+) = 4-methyl-2-oxopentanoate + CO2 + NADH. It carries out the reaction (2R,3S)-3-methylmalate + NAD(+) = 2-oxobutanoate + CO2 + NADH. The catalysed reaction is (R)-malate + NAD(+) = pyruvate + CO2 + NADH. The protein operates within amino-acid biosynthesis; L-leucine biosynthesis; L-leucine from 3-methyl-2-oxobutanoate: step 3/4. It participates in amino-acid biosynthesis; L-isoleucine biosynthesis; 2-oxobutanoate from pyruvate: step 3/3. Catalyzes the oxidation of 3-carboxy-2-hydroxy-4-methylpentanoate (3-isopropylmalate) to 3-carboxy-4-methyl-2-oxopentanoate, which decarboxylates to 4-methyl-2-oxopentanoate (2-oxoisocaproate). Also catalyzes the oxidative decarboxylation of 3-methylmalate to 2-oxobutyrate, and that of D-malate to pyruvate. Cannot use NADP(+) instead of NAD(+). Cannot catalyze the oxidation of L-malate, L-tartrate, D-tartrate, DL-isocitrate, or DL-lactate. The protein is 3-isopropylmalate/3-methylmalate dehydrogenase (leuB) of Methanocaldococcus jannaschii (strain ATCC 43067 / DSM 2661 / JAL-1 / JCM 10045 / NBRC 100440) (Methanococcus jannaschii).